Consider the following 304-residue polypeptide: N-acetyl-D-glucosamine kinase (304 aa).

ATP is bound by residues 4-11 (GFDMGGTK) and 133-140 (GLGGGLVI). 4 residues coordinate Zn(2+): His157, Cys177, Cys179, and Cys184.

The protein belongs to the ROK (NagC/XylR) family. NagK subfamily.

The catalysed reaction is N-acetyl-D-glucosamine + ATP = N-acetyl-D-glucosamine 6-phosphate + ADP + H(+). It participates in cell wall biogenesis; peptidoglycan recycling. Functionally, catalyzes the phosphorylation of N-acetyl-D-glucosamine (GlcNAc) derived from cell-wall degradation, yielding GlcNAc-6-P. This chain is N-acetyl-D-glucosamine kinase, found in Pectobacterium atrosepticum (strain SCRI 1043 / ATCC BAA-672) (Erwinia carotovora subsp. atroseptica).